We begin with the raw amino-acid sequence, 864 residues long: MYMARCGPKNNVLCFPFQLSFLFSKRLINKRFKYTLQTEDEKDMMGSLSKNKIITPEDVEFKLAQLREFSNTLKERIHNTKSVNSDGHQSNSIAPISEDSRNVNVTKISSVPNEEKSKNLSDLIHSSFLEKMDHLVPKVIRERVADDDILAKNLFDRSHSNWAPVIDRLYVSEKRFMDIDSREFSVWLNGTVKYLPFHSILHLDEMLLEQINGDVVKFNTHMYECIFNNLGNLKPTNFNQDGTNDKVILKMKELLERYDKALKITEERINKKEGFPSKVPKMTQAILNNCLKYSTKCSSFHDMDYFITKFRDDYGITPNKQNLTTVIQFYSRKEMTKQAWNTFDTMKFLSTKHFPDICTYNTMLRICEKERNFPKALDLFQEIQDHNIKPTTNTYIMMARVLASSSSNAVVSEGKSDSLRLLGWKYLHELEDKNLYRHKKDDLNLFLAMMALAAFDGDIELSRALYYLFIAKKYKTLCANWKGNILVDQDTIWKSTLMPEMLNYLMLAYARFDPRNLPVLSGYEKGIELRRKFLREFDSSMRLDDTDKLVKFKLPFLPISDLNSEAQVLAESNAIWSFNLENGGTRNTLTSSNEAALEDIKKYRQLLDSFAQEAEDFNEFKFKVMYEVTKMQRESINVNVFNKISLHTYLSIPINLKQQKEFLRRLTFFTFQQHEFEAVIKRLYEGYRNIPSSHTRDQNSISTEAISVSKPETTEDLNLIMHDIWYITCLRHKIMMDTTLYELVMKAAIEFQNEDLAKKVWNDRGKFRTTVPFLKMDQRIRIAKDQKFAHLMVEFFTKQGKYSDAIAIILSSKNRFNWTYSMVRNLHKALEEIEDRNSVEILLDVVNKKSHAKALKWEEQELNM.

The N-terminal 76 residues, 1 to 76, are a transit peptide targeting the mitochondrion; sequence MYMARCGPKN…REFSNTLKER (76 aa). PPR repeat units lie at residues 319–353 and 356–390; these read NKQN…STKH and DICT…NIKP.

Belongs to the CCM1 family. In terms of assembly, binds to mitochondrial small subunit 15S rRNA.

The protein resides in the mitochondrion. Functionally, regulates mitochondrial small subunit maturation by controlling 15S rRNA 5'-end processing. Localizes to the 5' precursor of the 15S rRNA in a position that is subsequently occupied by mS47 in the mature yeast mtSSU. Uses structure and sequence-specific RNA recognition, binding to a single-stranded region of the precursor and specifically recognizing bases -6 to -1. The exchange of Ccm1 for mS47 is coupled to the irreversible removal of precursor rRNA that is accompanied by conformational changes of the mitoribosomal proteins uS5m and mS26. These conformational changes signal completion of 5'-end rRNA processing through protection of the mature 5'-end of the 15S rRNA and stabilization of mS47. The removal of the 5' precursor together with the dissociation of Ccm1 may be catalyzed by the 5'-3' exoribonuclease Pet127. Involved in the specific removal of group I introns in mitochondrial encoded transcripts. The chain is Mitochondrial 15S rRNA processing factor CCM1 (CCM1) from Saccharomyces cerevisiae (strain JAY291) (Baker's yeast).